Here is a 100-residue protein sequence, read N- to C-terminus: Small ribosomal subunit protein uS14c (100 aa).

Basic and acidic residues predominate over residues 1 to 10 (MARKGLIERE). Residues 1 to 29 (MARKGLIEREKKRKKLEQKYHSIRGSSKK) form a disordered region.

Belongs to the universal ribosomal protein uS14 family. Part of the 30S ribosomal subunit.

The protein localises to the plastid. Its subcellular location is the chloroplast. Binds 16S rRNA, required for the assembly of 30S particles. The sequence is that of Small ribosomal subunit protein uS14c from Acorus calamus (Sweet flag).